Reading from the N-terminus, the 625-residue chain is Somatic embryogenesis receptor kinase 1 (625 aa).

Positions M1–A26 are cleaved as a signal peptide. Residues N27–G238 lie on the Extracellular side of the membrane. A disulfide bridge links C58 with C65. Leucine-rich repeat receptor-like protein kinase binding regions lie at residues T59–N78 and Y97–S102. F61–H62 is a brassinolide binding site. LRR repeat units follow at residues L92–L116, N118–L140, S141–I164, and T165–L189. N104 and N115 each carry an N-linked (GlcNAc...) asparagine glycan. 2 leucine-rich repeat receptor-like protein kinase binding regions span residues D123–L126 and F145–R147. Residues N150, N163, and N184 are each glycosylated (N-linked (GlcNAc...) asparagine). The leucine-rich repeat receptor-like protein kinase binding stretch occupies residues D171–S194. C202 and C210 are disulfide-bonded. A helical membrane pass occupies residues A239–F259. Residues A260–R625 are Cytoplasmic-facing. Residues S291, S299, and S303 each carry the phosphoserine modification. A Protein kinase domain is found at F302–Q589. Residue L308 to V316 participates in ATP binding. At T325 the chain carries Phosphothreonine. Position 330 (K330) interacts with ATP. Phosphothreonine is present on residues T337 and T346. Phosphoserine is present on residues S352, S383, S386, and S394. Phosphothreonine is present on T402. Position 415 is a phosphoserine (S415). The Proton acceptor role is filled by D429. A Phosphotyrosine modification is found at Y456. 4 positions are modified to phosphothreonine: T459, T462, T463, and T468. At Y476 the chain carries Phosphotyrosine. Position 478 is a phosphoserine (S478). At T479 the chain carries Phosphothreonine. S483 bears the Phosphoserine mark. T541 bears the Phosphothreonine mark. Position 543 is a phosphotyrosine (Y543). Residue T559 is modified to Phosphothreonine. Phosphoserine is present on residues S606 and S612. At T613 the chain carries Phosphothreonine. A Phosphotyrosine modification is found at Y614. A Phosphoserine modification is found at S622.

The protein belongs to the protein kinase superfamily. Ser/Thr protein kinase family. As to quaternary structure, monomer, homo- and heterodimer. Interacts with KAPP, CDC48A, GRF6 or GRF7, SERK2, BRI1 and SERK3/BAK1 to form the SERK1 signaling complex. Bind to BRI1 in a brassinolide-dependent manner. Heterodimer with PSKR1. Interacts with the EF-Tu receptor EFR and FLS2 in a specific ligand-induced manner. Interacts with ERECTA in a EPF2-induced manner. Interacts with ERL1 in a EPF1-induced manner. Interacts with TMM. In the presence of the signal peptide RGF1, interacts with RGI1/RGFR4/RCH2, RGI2/RGFR3/RCH1, RGI3/RGFR1, RGI4/RGFR2/SKM2 and RGI5/RGFR5. Mg(2+) is required as a cofactor. In terms of processing, glycosylated. Important for targeting to the plasma membrane. Post-translationally, intermolecular autophosphorylation. The catalytic activity of SERK1 depends on the presence of a phosphorylated Thr residue in SERK1. The phosphorylation is induced by brassinosteroids. Transphosphorylation by BRI1 occurs only on Ser-299 and Thr-462. Dephosphorylation of threonine residues by the kinase-associated protein phosphatase (KAPP) is involved in SERK1 endocytosis. In terms of tissue distribution, expressed in flowers, tapetum, developing microspores, all cells of the embryo sac, provascular strands and developing vascular bundles. Low expression in adult vascular tissue. Detected in root meristem.

Its subcellular location is the cell membrane. The protein resides in the endoplasmic reticulum membrane. The catalysed reaction is L-seryl-[protein] + ATP = O-phospho-L-seryl-[protein] + ADP + H(+). It carries out the reaction L-threonyl-[protein] + ATP = O-phospho-L-threonyl-[protein] + ADP + H(+). It catalyses the reaction L-tyrosyl-[protein] + ATP = O-phospho-L-tyrosyl-[protein] + ADP + H(+). Inhibited by manganese. Functionally, dual specificity kinase acting on both serine/threonine- and tyrosine-containing substrates. Phosphorylates BRI1 on 'Ser-887' and CDC48 on at least one threonine residue and on 'Ser-41'. Confers embryogenic competence. Acts redundantly with SERK2 as a control point for sporophytic development controlling male gametophyte production. Involved in the brassinolide signaling pathway. Probably required during small peptide (e.g. RGF1) signaling. Involved in the perception of phytosulfokine and subsequent signal transduction. Acts as a RLK5 coreceptor and promotes high-affinity IDA sensing, thus being a positive regulator of floral abscission. This is Somatic embryogenesis receptor kinase 1 from Arabidopsis thaliana (Mouse-ear cress).